Reading from the N-terminus, the 370-residue chain is A-type ATP synthase subunit C (370 aa).

It belongs to the V-ATPase V0D/AC39 subunit family. As to quaternary structure, has multiple subunits with at least A(3), B(3), C, D, E, F, H, I and proteolipid K(x).

Its subcellular location is the cell membrane. Its function is as follows. Component of the A-type ATP synthase that produces ATP from ADP in the presence of a proton gradient across the membrane. In Pyrococcus furiosus (strain ATCC 43587 / DSM 3638 / JCM 8422 / Vc1), this protein is A-type ATP synthase subunit C.